We begin with the raw amino-acid sequence, 721 residues long: Polyribonucleotide nucleotidyltransferase (721 aa).

Mg(2+)-binding residues include D495 and D501. A KH domain is found at 562-621; the sequence is PRITTIKIRPERIKDIIGPGGKTIKDITARTGTSINIEDDGSVSIASPNQDKVEEAIKMI. One can recognise an S1 motif domain in the interval 631 to 699; sequence GRIYMGTVRK…RSGKIRLSRK (69 aa). The tract at residues 699–721 is disordered; sequence KEALADSAKKSEGTEPPKGEPAK.

The protein belongs to the polyribonucleotide nucleotidyltransferase family. Mg(2+) serves as cofactor.

The protein localises to the cytoplasm. It catalyses the reaction RNA(n+1) + phosphate = RNA(n) + a ribonucleoside 5'-diphosphate. Functionally, involved in mRNA degradation. Catalyzes the phosphorolysis of single-stranded polyribonucleotides processively in the 3'- to 5'-direction. The chain is Polyribonucleotide nucleotidyltransferase from Anaeromyxobacter dehalogenans (strain 2CP-C).